The chain runs to 300 residues: GTP-binding protein At2g22870 (300 aa).

Residues 119–297 (DRPEIAILGR…LLHMSQLRNY (179 aa)) form the EngB-type G domain. Residues 127-134 (GRSNVGKS), 154-158 (GKTQL), 172-175 (DLPG), 239-242 (TKCD), and 276-278 (TSS) each bind GTP. 2 residues coordinate Mg(2+): serine 134 and threonine 156.

Belongs to the TRAFAC class TrmE-Era-EngA-EngB-Septin-like GTPase superfamily. EngB GTPase family. Requires Mg(2+) as cofactor.

The sequence is that of GTP-binding protein At2g22870 (EMB2001) from Arabidopsis thaliana (Mouse-ear cress).